The following is a 60-amino-acid chain: Small integral membrane protein 3 (60 aa).

The helical transmembrane segment at 20 to 40 (IWVIVLIILATIVIMTSLLLC) threads the bilayer.

Its subcellular location is the membrane. The polypeptide is Small integral membrane protein 3 (SMIM3) (Homo sapiens (Human)).